The sequence spans 370 residues: Peptide chain release factor 1 (370 aa).

An N5-methylglutamine modification is found at Gln-239.

The protein belongs to the prokaryotic/mitochondrial release factor family. Post-translationally, methylated by PrmC. Methylation increases the termination efficiency of RF1.

It localises to the cytoplasm. Peptide chain release factor 1 directs the termination of translation in response to the peptide chain termination codons UAG and UAA. This chain is Peptide chain release factor 1, found in Bacteroides thetaiotaomicron (strain ATCC 29148 / DSM 2079 / JCM 5827 / CCUG 10774 / NCTC 10582 / VPI-5482 / E50).